A 485-amino-acid polypeptide reads, in one-letter code: MSLFDHKISELKELLHKKELSVSDLVDESYKRINEVDGKVQAFLALDEEKARAYAKELDEAVGEKDELGLLFGMPIGVKDNIVTKDLRTTASSKILQNFDPIYDATVVNRLRDAEVVTIGKLNMDEFAMGSSTENSGYKATKNPWNLNTVPGGSSGGSAASVAAGEVPFSLGSDTGGSIRQPASFCGVVGLKPTYGRVSRYGLIAFASSLDQIGPITRNVEDNAYVLQAIAGVDQMDATSANVDVPDFLSSLTGDIKGMKIAVPKEYLGEGVGEEAKESVLQALKVLEGLGATWEEVSLPHSKYALATYYLLSSSEASANLARFDGIRYGYRTDNAENLIDLYKNTRSEGFGNEVKRRIMLGTFALSSGYYDAYYKKAQKVRTLIKKDFEDVFEKYDVIVGPTTPTPAFKIGEKTSDPLTMYANDILTIPVNLAGVPGISVPCGFANGLPLGLQIIGKHFDEGTVYRVAHAFEQATDHHKAKPEL.

Catalysis depends on charge relay system residues Lys-79 and Ser-154. Ser-178 serves as the catalytic Acyl-ester intermediate.

This sequence belongs to the amidase family. GatA subfamily. As to quaternary structure, heterotrimer of A, B and C subunits.

The enzyme catalyses L-glutamyl-tRNA(Gln) + L-glutamine + ATP + H2O = L-glutaminyl-tRNA(Gln) + L-glutamate + ADP + phosphate + H(+). Functionally, allows the formation of correctly charged Gln-tRNA(Gln) through the transamidation of misacylated Glu-tRNA(Gln) in organisms which lack glutaminyl-tRNA synthetase. The reaction takes place in the presence of glutamine and ATP through an activated gamma-phospho-Glu-tRNA(Gln). This is Glutamyl-tRNA(Gln) amidotransferase subunit A from Bacillus pumilus (strain SAFR-032).